The sequence spans 223 residues: Deoxyribose-phosphate aldolase (223 aa).

Aspartate 92 acts as the Proton donor/acceptor in catalysis. Lysine 154 serves as the catalytic Schiff-base intermediate with acetaldehyde. The active-site Proton donor/acceptor is the lysine 182.

It belongs to the DeoC/FbaB aldolase family. DeoC type 1 subfamily.

The protein localises to the cytoplasm. It catalyses the reaction 2-deoxy-D-ribose 5-phosphate = D-glyceraldehyde 3-phosphate + acetaldehyde. The protein operates within carbohydrate degradation; 2-deoxy-D-ribose 1-phosphate degradation; D-glyceraldehyde 3-phosphate and acetaldehyde from 2-deoxy-alpha-D-ribose 1-phosphate: step 2/2. Its function is as follows. Catalyzes a reversible aldol reaction between acetaldehyde and D-glyceraldehyde 3-phosphate to generate 2-deoxy-D-ribose 5-phosphate. This chain is Deoxyribose-phosphate aldolase, found in Haemophilus influenzae (strain ATCC 51907 / DSM 11121 / KW20 / Rd).